Consider the following 1682-residue polypeptide: Sodium channel protein type 7 subunit alpha (1682 aa).

Residues 1–117 are Cytoplasmic-facing; that stretch reads MLASPEPKGL…RRTTIKVLVH (117 aa). The I repeat unit spans residues 100–401; it reads TLSPFNCIRR…ILAMAYEEEK (302 aa). The helical transmembrane segment at 118–137 threads the bilayer; the sequence is PFFQLFILISVLIDCVFMSL. At 138–141 the chain is on the extracellular side; that stretch reads TNLP. The chain crosses the membrane as a helical span at residues 142–167; that stretch reads KWRPVLENTLLGIYTFEILVKLFARG. Over 168–178 the chain is Cytoplasmic; the sequence is VWAGSFSFLGD. The chain crosses the membrane as a helical span at residues 179–196; sequence PWNWLDFSVTVFEVIIRY. Over 197 to 200 the chain is Extracellular; it reads SPLD. Residues 201 to 219 form a helical membrane-spanning segment; it reads FIPTLQTARTLRILKIIPL. Residues 220–237 lie on the Cytoplasmic side of the membrane; that stretch reads NQGLKSLVGVLIHCLKQL. A helical membrane pass occupies residues 238–259; the sequence is IGVIILTLFFLSIFSLIGMGLF. The Extracellular segment spans residues 260–338; it reads MGNLKHKCFR…PDQGFTNFDS (79 aa). Cysteine 267 and cysteine 307 form a disulfide bridge. 3 N-linked (GlcNAc...) asparagine glycosylation sites follow: asparagine 276, asparagine 281, and asparagine 309. Positions 339 to 366 form an intramembrane region, pore-forming; the sequence is FGWALFALFRLMAQDYPEVLYHQILYAS. Position 367 (glycine 367) is a topological domain, extracellular. The chain crosses the membrane as a helical span at residues 368 to 407; the sequence is KVYMIFFVVVSFLFSFYMASLFLGILAMAYEEEKQRVGEI. Topologically, residues 408–505 are cytoplasmic; sequence SKKIEPKFQQ…EFVHRIIMAP (98 aa). Serine 442 is subject to Phosphoserine; by PKA. The II repeat unit spans residues 487–758; sequence CSPCWLKLKE…QLAVARIKKG (272 aa). A helical membrane pass occupies residues 506-521; that stretch reads FTDLFLIICIILNVCF. The Extracellular segment spans residues 522–530; the sequence is LTLEHYPMS. Residues 531-559 traverse the membrane as a helical segment; that stretch reads KQTNTLLNIGNLVFIGIFTAEMIFKIIAM. Topologically, residues 560-568 are cytoplasmic; sequence HPYGYFQVG. Residues 569 to 586 traverse the membrane as a helical segment; it reads WNIFDSMIVFHGLIELCL. Topologically, residues 587–592 are extracellular; the sequence is ANVAGM. The helical transmembrane segment at 593–609 threads the bilayer; the sequence is ALLRLFRMLRIFKLGKY. Residues 610–626 are Cytoplasmic-facing; sequence WPTFQILMWSLSNSWVA. Residues 627–655 traverse the membrane as a helical segment; the sequence is LKDLVLLLFTFIFFSAAFGMKLFGKNYEE. Residues 656-673 are Extracellular-facing; it reads FVCHIDKDCQLPRWHMHD. 2 disulfides stabilise this stretch: cysteine 658–cysteine 664 and cysteine 696–cysteine 705. The segment at residues 674-700 is an intramembrane region (pore-forming); the sequence is FFHSFLNVFRILCGEWVETLWDCMEVA. A topological domain (extracellular) is located at residue glycine 701. A helical membrane pass occupies residues 702–732; the sequence is QSWCIPFYLMVILIGNLLVLYLFLALVSSFS. Topologically, residues 733–934 are cytoplasmic; that stretch reads SCKDVTAEEN…KTCCKIVENN (202 aa). Threonine 777 is subject to Phosphothreonine; by PKA. The segment at 801–871 is disordered; it reads TQDFLKDKEK…SKEKIKQSSS (71 aa). Basic and acidic residues predominate over residues 804-819; it reads FLKDKEKSSGTEKNAT. Over residues 820–834 the composition is skewed to polar residues; sequence ENESQSLIPSPSVSE. A Phosphoserine modification is found at serine 843. Phosphoserine; by PKA occurs at positions 869 and 905. One copy of the III repeat lies at 916 to 1224; the sequence is KGKIWQNIRK…RKQYRRLKKL (309 aa). The helical transmembrane segment at 935-953 threads the bilayer; that stretch reads WFKCFIGLVTLLSTGTLAF. At 954 to 961 the chain is on the extracellular side; the sequence is EDIYMDQR. Residues 962–990 traverse the membrane as a helical segment; the sequence is KTIKILLEYADMIFTYIFILEMLLKWMAY. At 991 to 998 the chain is on the cytoplasmic side; that stretch reads GFKAYFSN. A helical transmembrane segment spans residues 999–1020; that stretch reads GWYRLDFVVVIVFCLSLIGKTR. A topological domain (extracellular) is located at residue glutamate 1021. Residues 1022-1040 form a helical membrane-spanning segment; sequence ELKPLISMKFLRPLRVLSQ. Residues 1041–1055 are Cytoplasmic-facing; the sequence is FERMKVVVRALIKTT. Residues 1056–1080 form a helical membrane-spanning segment; that stretch reads LPTLNVFLVCLMIWLIFSIMGVDLF. The Extracellular portion of the chain corresponds to 1081-1127; that stretch reads AGRFYECIDPTSGERFPSSEVMNKSRCESLLFNESMLWENAKMNFDN. Residues cysteine 1087 and cysteine 1107 are joined by a disulfide bond. Residues asparagine 1103 and asparagine 1113 are each glycosylated (N-linked (GlcNAc...) asparagine). Residues 1128-1154 constitute an intramembrane region (pore-forming); it reads VGNGFLSLLQVATFNGWITIMNSAIDS. Over 1155 to 1167 the chain is Extracellular; the sequence is VAVNIQPHFEVNI. A helical membrane pass occupies residues 1168-1202; sequence YMYCYFINFIIFGVFLPLSMLITVIIDNFNKHKIK. The Cytoplasmic portion of the chain corresponds to 1203-1250; that stretch reads LGGSNIFITVKQRKQYRRLKKLMYEDSQRPVPRPLNKLQGFIFDVVTS. The IV repeat unit spans residues 1233–1531; that stretch reads VPRPLNKLQG…WKRFDPDRTQ (299 aa). A helical membrane pass occupies residues 1251–1272; that stretch reads QAFNVIVMVLICFQAIAMMIDT. Over 1273-1276 the chain is Extracellular; that stretch reads DVQS. A helical transmembrane segment spans residues 1277–1305; it reads LQMSIALYWINSIFVMLYTMECILKLIAF. Over 1306–1312 the chain is Cytoplasmic; sequence RCFYFTI. The helical transmembrane segment at 1313 to 1338 threads the bilayer; the sequence is AWNIFDFMVVIFSITGLCLPMTVGSY. Over 1339–1341 the chain is Extracellular; the sequence is LVP. A helical membrane pass occupies residues 1342–1362; the sequence is PSLVQLILLSRIIHMLRLGKG. The Cytoplasmic segment spans residues 1363–1377; the sequence is PKVFHNLMLPLMLSL. A helical transmembrane segment spans residues 1378-1402; that stretch reads PALLNIILLIFLVMFIYAVFGMYNF. The Extracellular segment spans residues 1403–1420; sequence AYVKKEAGINDVSNFETF. Positions 1421–1444 form an intramembrane region, pore-forming; sequence GNSMLCLFQVAIFAGWDGMLDAIF. Residues 1445–1468 are Extracellular-facing; that stretch reads NSKWSDCDPDKINPGTQVRGDCGN. Residues cysteine 1451 and cysteine 1466 are joined by a disulfide bond. The chain crosses the membrane as a helical span at residues 1469 to 1504; that stretch reads PSVGIFYFVSYILISWLIIVNMYIVVVMEFLNIASK. At 1505–1682 the chain is on the cytoplasmic side; sequence KKNKTLSEDD…KEKSPIQSQI (178 aa).

It belongs to the sodium channel (TC 1.A.1.10) family. SCN7A subfamily. As to quaternary structure, the sodium channel formed by SCN7A is probably a heterooligomeric complex consisting of the ion conducting pore forming alpha subunit SCN7A and regulatory beta subunits such as SCN3B. Interacts with ATP1A1; activates ATP1A1 and thereby indirectly signals to nearby neurons to regulate sodium homeostasis. In terms of tissue distribution, heart and uterus.

The protein resides in the cell membrane. The catalysed reaction is Na(+)(in) = Na(+)(out). In terms of biological role, sodium leak channel functioning as an osmosensor regulating sodium ion levels in various tissues and organs. While most sodium channels are voltage-gated, SCN7A is not and lets sodium flow through membrane along its concentration gradient. In glial cells of the central nervous system, senses body-fluid sodium levels and controls salt intake behavior as well as voluntary water intake through activation of nearby neurons to maintain appropriate sodium levels in the body. By mediating sodium influx into keratinocytes, also plays a role in skin barrier homeostasis. In Homo sapiens (Human), this protein is Sodium channel protein type 7 subunit alpha.